The chain runs to 452 residues: MQVKETVADGLKREFQVNVPAADIDAKIDEKLADLKDKVRLNGFRPGKVPTAHLKRVYGRSVAAETIDKLVRDTNDGIFSERGFRLATEPKITMPQDQKEIEDILEGKSDLTYTVAIEVVPAIELADFKSFSVEKPVVDVADSDVDEAIKRIADANRAYADKAEGAKAETGDRVTVSFKGTIDGVAFDGGTGEDIPVVIGSASFIPGFEDQLVGIAVGETRTIKVTFPANYASETLAGKPAEFETTATKLEAPQETTIDDEFAKTLGLESLDKLKEAAKARLAAEYAGASRLKVKRQLLDRLDEAHKFDAPPSLIEQEFEVMWRSINAEMQSTGKTFADENTTEDAAKEEYRKIADRRVRLGLVLSEIGEKNKIQVTDDEVSRAVIERARQMPGREKEVWDFYRSNPEALAQLRAPIYEDKVVDFILELANVTEKKVTREELYKDEDDKTAA.

Residues 171–256 (GDRVTVSFKG…ATKLEAPQET (86 aa)) enclose the PPIase FKBP-type domain.

Belongs to the FKBP-type PPIase family. Tig subfamily.

It localises to the cytoplasm. It catalyses the reaction [protein]-peptidylproline (omega=180) = [protein]-peptidylproline (omega=0). Its function is as follows. Involved in protein export. Acts as a chaperone by maintaining the newly synthesized protein in an open conformation. Functions as a peptidyl-prolyl cis-trans isomerase. The chain is Trigger factor from Rhodopseudomonas palustris (strain ATCC BAA-98 / CGA009).